Reading from the N-terminus, the 358-residue chain is Carbohydrate sulfotransferase 10 (358 aa).

Topologically, residues 1 to 6 (MHHQWL) are cytoplasmic. The helical; Signal-anchor for type II membrane protein transmembrane segment at 7-27 (LLAACFWVIFMFMVASKFITL) threads the bilayer. Residues 28 to 358 (TFKDPDGYGA…GYRVPDFLLN (331 aa)) lie on the Lumenal side of the membrane. An N-linked (GlcNAc...) asparagine glycan is attached at asparagine 101. 3'-phosphoadenylyl sulfate is bound by residues 129–135 (PKVGNTQ) and 191–199 (RDPFERLIS). N-linked (GlcNAc...) asparagine glycosylation is present at asparagine 318.

Belongs to the sulfotransferase 2 family. In terms of tissue distribution, predominantly expressed in hypertrophic, prehypertrophic and proliferative chondrocytes at E12 but is down-regulated in epiphyseal chondrocytes.

It is found in the golgi apparatus membrane. Catalyzes the transfer of sulfate to position 3 of terminal glucuronic acid of both protein- and lipid-linked oligosaccharides. Participates in biosynthesis of HNK-1 carbohydrate structure, a sulfated glucuronyl-lactosaminyl residue carried by many neural recognition molecules, which is involved in cell interactions during ontogenetic development and in synaptic plasticity in the adult. This is Carbohydrate sulfotransferase 10 (CHST10) from Gallus gallus (Chicken).